A 317-amino-acid chain; its full sequence is Carbonic anhydrase 5B, mitochondrial (317 aa).

Residues 1-33 (MAVMNHLRVILQVSSSTLPWRRCWVPRLVPRRS) constitute a mitochondrion transit peptide. The Alpha-carbonic anhydrase domain occupies 37 to 296 (YTCTYRTRNR…LMNRTVRSSF (260 aa)). Zn(2+) is bound by residues His130, His132, and His155. Position 235–236 (235–236 (TT)) interacts with substrate.

It belongs to the alpha-carbonic anhydrase family. Zn(2+) is required as a cofactor. Expressed in the heart, liver, lung, kidney, testis, and skeletal muscle (at protein level).

It localises to the mitochondrion. The catalysed reaction is hydrogencarbonate + H(+) = CO2 + H2O. Functionally, mitochondrial carbonic anhydrase that catalyzes the reversible conversion of carbon dioxide to bicarbonate/HCO3. This is Carbonic anhydrase 5B, mitochondrial (Ca5b) from Mus musculus (Mouse).